The chain runs to 126 residues: Large ribosomal subunit protein bL17 (126 aa).

The protein belongs to the bacterial ribosomal protein bL17 family. Part of the 50S ribosomal subunit. Contacts protein L32.

In Xylella fastidiosa (strain M12), this protein is Large ribosomal subunit protein bL17.